Consider the following 250-residue polypeptide: MRILLTNDDGVYAKGIETLYLALIEEHDVTVVAPETEQSAVGHAITWLDPLRVKPVHRNGHFFGHALTGTPADCVKIAVAELMSPPPDMVVSGVNMGANVGVNVIYSGTVSAATEAAVMGIPSMAVSIDSFQPTDFSAVTEFVPRLLRIVAKEGLPPGVCLNVNVPNLPADRIRGVKVTRQGHMKMVERYDRRIDPRGHVYYWLTNSALLRDDDPATDSLALARDYISVTPIHHDLTHYEMIDTLGKWNL.

Residues Asp8, Asp9, Ser39, and Asn95 each contribute to the a divalent metal cation site.

It belongs to the SurE nucleotidase family. The cofactor is a divalent metal cation.

It is found in the cytoplasm. It catalyses the reaction a ribonucleoside 5'-phosphate + H2O = a ribonucleoside + phosphate. In terms of biological role, nucleotidase that shows phosphatase activity on nucleoside 5'-monophosphates. This Syntrophobacter fumaroxidans (strain DSM 10017 / MPOB) protein is 5'-nucleotidase SurE.